Reading from the N-terminus, the 258-residue chain is 1-(5-phosphoribosyl)-5-[(5-phosphoribosylamino)methylideneamino] imidazole-4-carboxamide isomerase (258 aa).

Catalysis depends on D17, which acts as the Proton acceptor. Catalysis depends on D136, which acts as the Proton donor.

The protein belongs to the HisA/HisF family.

The protein resides in the cytoplasm. The enzyme catalyses 1-(5-phospho-beta-D-ribosyl)-5-[(5-phospho-beta-D-ribosylamino)methylideneamino]imidazole-4-carboxamide = 5-[(5-phospho-1-deoxy-D-ribulos-1-ylimino)methylamino]-1-(5-phospho-beta-D-ribosyl)imidazole-4-carboxamide. It functions in the pathway amino-acid biosynthesis; L-histidine biosynthesis; L-histidine from 5-phospho-alpha-D-ribose 1-diphosphate: step 4/9. The polypeptide is 1-(5-phosphoribosyl)-5-[(5-phosphoribosylamino)methylideneamino] imidazole-4-carboxamide isomerase (Corynebacterium jeikeium (strain K411)).